The following is a 262-amino-acid chain: Ribosomal RNA small subunit methyltransferase A (262 aa).

Residues histidine 11, isoleucine 13, glycine 38, glutamate 60, aspartate 85, and asparagine 105 each contribute to the S-adenosyl-L-methionine site.

It belongs to the class I-like SAM-binding methyltransferase superfamily. rRNA adenine N(6)-methyltransferase family. RsmA subfamily.

It localises to the cytoplasm. The catalysed reaction is adenosine(1518)/adenosine(1519) in 16S rRNA + 4 S-adenosyl-L-methionine = N(6)-dimethyladenosine(1518)/N(6)-dimethyladenosine(1519) in 16S rRNA + 4 S-adenosyl-L-homocysteine + 4 H(+). Specifically dimethylates two adjacent adenosines (A1518 and A1519) in the loop of a conserved hairpin near the 3'-end of 16S rRNA in the 30S particle. May play a critical role in biogenesis of 30S subunits. This is Ribosomal RNA small subunit methyltransferase A from Neorickettsia sennetsu (strain ATCC VR-367 / Miyayama) (Ehrlichia sennetsu).